Consider the following 530-residue polypeptide: Na(+)/H(+) antiporter NhaB (530 aa).

A run of 11 helical transmembrane segments spans residues 23-43 (VAII…NPFL), 45-65 (GWLL…CYPL), 90-110 (LVAN…IYFM), 113-133 (LLLF…LLSI), 140-160 (AFLS…SVAV), 205-225 (LLMH…VGEP), 238-258 (FGEF…AGML), 308-328 (IAVW…LIGL), 351-371 (EEAL…AVII), 451-471 (ATPN…APLI), and 479-499 (VIMA…GIMF).

Belongs to the NhaB Na(+)/H(+) (TC 2.A.34) antiporter family.

The protein localises to the cell inner membrane. The enzyme catalyses 2 Na(+)(in) + 3 H(+)(out) = 2 Na(+)(out) + 3 H(+)(in). Na(+)/H(+) antiporter that extrudes sodium in exchange for external protons. The chain is Na(+)/H(+) antiporter NhaB from Vibrio cholerae serotype O1 (strain ATCC 39541 / Classical Ogawa 395 / O395).